Consider the following 554-residue polypeptide: Gamma-aminobutyric acid receptor subunit alpha-4 (554 aa).

Residues 1–35 (MVSAKKVPAIALSAGVSFALLRFLCLAVCLNESPG) form the signal peptide. Over 36 to 259 (QNQKEEKLCT…FHLRRKMGYF (224 aa)) the chain is Extracellular. A glycan (N-linked (GlcNAc...) asparagine) is linked at Asn47. Arg100 contacts 4-aminobutanoate. N-linked (GlcNAc...) asparagine glycans are attached at residues Asn144 and Asn157. 4-aminobutanoate is bound at residue Thr163. Cysteines 172 and 186 form a disulfide. A helical transmembrane segment spans residues 260 to 280 (MIQTYIPCIMTVILSQVSFWI). Residues 281–284 (NKES) lie on the Cytoplasmic side of the membrane. The helical transmembrane segment at 285–305 (VPARTVFGITTVLTMTTLSIS) threads the bilayer. At 306–318 (ARHSLPKVSYATA) the chain is on the extracellular side. The helical transmembrane segment at 319 to 341 (MDWFIAVCFAFVFSALIEFAAVN) threads the bilayer. Residues 342–517 (YFTNIQMEKA…PPPSGSGTSK (176 aa)) lie on the Cytoplasmic side of the membrane. Disordered regions lie at residues 350-381 (KAKR…QNTN), 397-435 (ESDV…SPNP), 452-471 (PSAS…ASVG), and 495-515 (ATGK…GSGT). Over residues 410-422 (SSKSSTVVQESSK) the composition is skewed to low complexity. The segment covering 502–511 (TPPPSAPPPS) has biased composition (pro residues). The chain crosses the membrane as a helical span at residues 518–540 (IDKYARILFPVTFGAFNMVYWVV). Residues 541–554 (YLSKDTMEKSESLM) lie on the Extracellular side of the membrane.

Belongs to the ligand-gated ion channel (TC 1.A.9) family. Gamma-aminobutyric acid receptor (TC 1.A.9.5) subfamily. GABRA4 sub-subfamily. In terms of assembly, heteropentamer, formed by a combination of alpha (GABRA1-6), beta (GABRB1-3), gamma (GABRG1-3), delta (GABRD), epsilon (GABRE), rho (GABRR1-3), pi (GABRP) and theta (GABRQ) chains, each subunit exhibiting distinct physiological and pharmacological properties. Expressed in the brain.

The protein resides in the cell membrane. It localises to the postsynaptic cell membrane. It carries out the reaction chloride(in) = chloride(out). Potentiated by histamine. Its function is as follows. Alpha subunit of the heteropentameric ligand-gated chloride channel gated by gamma-aminobutyric acid (GABA), a major inhibitory neurotransmitter in the brain. GABA-gated chloride channels, also named GABA(A) receptors (GABAAR), consist of five subunits arranged around a central pore and contain GABA active binding site(s) located at the alpha and beta subunit interface(s). When activated by GABA, GABAARs selectively allow the flow of chloride anions across the cell membrane down their electrochemical gradient. GABAARs containing alpha-4 are predominantly extrasynaptic, contributing to tonic inhibition in dentate granule cells and thalamic relay neurons. Extrasynaptic alpha-4-containing GABAARs control levels of excitability and network activity. GABAAR containing alpha-4-beta-3-delta subunits can simultaneously bind GABA and histamine where histamine binds at the interface of two neighboring beta subunits, which may be involved in the regulation of sleep and wakefulness. This is Gamma-aminobutyric acid receptor subunit alpha-4 from Homo sapiens (Human).